Consider the following 107-residue polypeptide: uncharacterized protein (107 aa).

An N-terminal signal peptide occupies residues Met1–Ala34.

This is an uncharacterized protein from Saccharomyces cerevisiae (strain ATCC 204508 / S288c) (Baker's yeast).